The sequence spans 602 residues: Sodium- and chloride-dependent GABA transporter 2 (602 aa).

Over 1–40 (MDSRVSGTTSNGETKPVCPGLEKAAEDGALQREQWSNKME) the chain is Cytoplasmic. 3 helical membrane-spanning segments follow: residues 41 to 61 (FLLS…FPYL), 68 to 88 (GAFF…VFLL), and 121 to 141 (IVTL…FYLF). Over 142-206 (SSFTIDLPWG…GIQHLGALRW (65 aa)) the chain is Extracellular. Cys-153 and Cys-162 are disulfide-bonded. 2 N-linked (GlcNAc...) asparagine glycosylation sites follow: Asn-169 and Asn-173. 2 consecutive transmembrane segments (helical) span residues 207 to 227 (ELAL…WKGV) and 233 to 253 (VVYF…IRGV). N-linked (GlcNAc...) asparagine glycosylation is present at Asn-269. The next 7 membrane-spanning stretches (helical) occupy residues 282 to 302 (AGTQ…ALGS), 319 to 339 (FLNS…LGFM), 366 to 386 (VVML…VVLL), 418 to 438 (VLIL…LTEG), 453 to 473 (GMCL…AYGA), 490 to 510 (PLIK…TFLF), and 528 to 548 (WWGD…IPAW). The Cytoplasmic segment spans residues 549–602 (SCYKLSTLKGSFRERVRQLLCPAKDLPQGHREGPSAPATPRTSLLILTELEPHH). Position 587 is a phosphothreonine (Thr-587). Ser-591 is subject to Phosphoserine.

This sequence belongs to the sodium:neurotransmitter symporter (SNF) (TC 2.A.22) family. SLC6A13 subfamily.

The protein resides in the cell membrane. The protein localises to the basolateral cell membrane. It catalyses the reaction 4-aminobutanoate(out) + chloride(out) + 2 Na(+)(out) = 4-aminobutanoate(in) + chloride(in) + 2 Na(+)(in). It carries out the reaction taurine(out) + chloride(out) + 2 Na(+)(out) = taurine(in) + chloride(in) + 2 Na(+)(in). The catalysed reaction is beta-alanine(out) + chloride(out) + 2 Na(+)(out) = beta-alanine(in) + chloride(in) + 2 Na(+)(in). The enzyme catalyses hypotaurine(out) + chloride(out) + 2 Na(+)(out) = hypotaurine(in) + chloride(in) + 2 Na(+)(in). Its function is as follows. Mediates sodium- and chloride-dependent transport of gamma-aminobutyric acid (GABA). Can also mediate transport of beta-alanine, taurine and hypotaurine. This is Sodium- and chloride-dependent GABA transporter 2 (SLC6A13) from Bos taurus (Bovine).